We begin with the raw amino-acid sequence, 301 residues long: Homeobox protein Nkx-2.6 (301 aa).

Positions 22–135 (ERSCPAASPH…QPKARQRRKP (114 aa)) are disordered. A DNA-binding region (homeobox) is located at residues 132–191 (RRKPRVLFSQAQVLALERRFKQQRYLSAPEREHLASALQLTSTQVKIWFQNRRYKCKRQR).

The protein belongs to the NK-2 homeobox family.

It localises to the nucleus. Its function is as follows. Acts as a transcriptional activator. In conjunction with NKX2-5, may play a role in both pharyngeal and cardiac embryonic development. This chain is Homeobox protein Nkx-2.6 (NKX2-6), found in Homo sapiens (Human).